The following is a 156-amino-acid chain: Ribosome maturation factor RimP (156 aa).

The protein belongs to the RimP family.

It is found in the cytoplasm. Required for maturation of 30S ribosomal subunits. The protein is Ribosome maturation factor RimP of Fusobacterium nucleatum subsp. nucleatum (strain ATCC 25586 / DSM 15643 / BCRC 10681 / CIP 101130 / JCM 8532 / KCTC 2640 / LMG 13131 / VPI 4355).